The chain runs to 83 residues: Small ribosomal subunit protein bS16 (83 aa).

Belongs to the bacterial ribosomal protein bS16 family.

The polypeptide is Small ribosomal subunit protein bS16 (Borrelia duttonii (strain Ly)).